The chain runs to 1012 residues: DNA polymerase gamma (1012 aa).

It belongs to the DNA polymerase type-A family. Mg(2+) serves as cofactor.

It localises to the mitochondrion. It carries out the reaction DNA(n) + a 2'-deoxyribonucleoside 5'-triphosphate = DNA(n+1) + diphosphate. Involved in the replication of mitochondrial DNA. In Komagataella pastoris (Yeast), this protein is DNA polymerase gamma (MIP1).